The following is a 307-amino-acid chain: Mycothiol acetyltransferase (307 aa).

N-acetyltransferase domains lie at His-15–Pro-158 and Val-164–Ser-307. Glu-46 contacts 1D-myo-inositol 2-(L-cysteinylamino)-2-deoxy-alpha-D-glucopyranoside. An acetyl-CoA-binding site is contributed by Leu-90–Val-92. Glu-191, Lys-230, and Glu-239 together coordinate 1D-myo-inositol 2-(L-cysteinylamino)-2-deoxy-alpha-D-glucopyranoside. Residues Val-243–Val-245 and Gln-250–Lys-256 each bind acetyl-CoA. Tyr-277 is a 1D-myo-inositol 2-(L-cysteinylamino)-2-deoxy-alpha-D-glucopyranoside binding site.

Belongs to the acetyltransferase family. MshD subfamily. In terms of assembly, monomer.

It catalyses the reaction 1D-myo-inositol 2-(L-cysteinylamino)-2-deoxy-alpha-D-glucopyranoside + acetyl-CoA = mycothiol + CoA + H(+). In terms of biological role, catalyzes the transfer of acetyl from acetyl-CoA to desacetylmycothiol (Cys-GlcN-Ins) to form mycothiol. This Streptomyces griseus subsp. griseus (strain JCM 4626 / CBS 651.72 / NBRC 13350 / KCC S-0626 / ISP 5235) protein is Mycothiol acetyltransferase.